The following is a 245-amino-acid chain: uncharacterized protein (245 aa).

Residues 1 to 18 (MKSAAILALLAQALAVTA) form the signal peptide. The interval 21–66 (VEGDRTPGTRTLDLPNFPGGSVPTRGVEKRADLPPDNGGGNAPDPD) is disordered. N-linked (GlcNAc...) asparagine glycans are attached at residues Asn-189 and Asn-225.

It localises to the secreted. This is an uncharacterized protein from Arthroderma benhamiae (strain ATCC MYA-4681 / CBS 112371) (Trichophyton mentagrophytes).